Reading from the N-terminus, the 308-residue chain is Sulfoquinovosyl glycerol transport system permease protein SmoG (308 aa).

Transmembrane regions (helical) follow at residues 28–48, 92–112, 126–146, 164–184, 223–243, and 279–299; these read LAVL…VYPV, VLIT…LALL, SLLI…AWFF, GIIW…TIIW, ITLP…TITA, and LGYG…VTAV. The ABC transmembrane type-1 domain maps to 88 to 300; sequence TWNTVLITLI…ALSMCVTAVY (213 aa).

The protein belongs to the binding-protein-dependent transport system permease family. As to quaternary structure, the complex is probably composed of two ATP-binding proteins (SmoE), two transmembrane proteins (SmoG and SmoH) and a solute-binding protein (SmoF).

The protein localises to the cell inner membrane. Functionally, part of the ABC transporter complex SmoEFGH involved in sulfoquinovosyl glycerol (SQGro) uptake. Responsible for the translocation of the substrate across the membrane. The protein is Sulfoquinovosyl glycerol transport system permease protein SmoG of Agrobacterium fabrum (strain C58 / ATCC 33970) (Agrobacterium tumefaciens (strain C58)).